The chain runs to 125 residues: Holo-[acyl-carrier-protein] synthase (125 aa).

Residues Asp8 and Glu57 each contribute to the Mg(2+) site.

This sequence belongs to the P-Pant transferase superfamily. AcpS family. Mg(2+) serves as cofactor.

The protein localises to the cytoplasm. It catalyses the reaction apo-[ACP] + CoA = holo-[ACP] + adenosine 3',5'-bisphosphate + H(+). Transfers the 4'-phosphopantetheine moiety from coenzyme A to a Ser of acyl-carrier-protein. The sequence is that of Holo-[acyl-carrier-protein] synthase from Solibacter usitatus (strain Ellin6076).